Here is a 433-residue protein sequence, read N- to C-terminus: Probable oxaloacetate decarboxylase beta chain (433 aa).

The next 9 membrane-spanning stretches (helical) occupy residues 13 to 35 (LFHLQWGQGIMILVGLVLLYLAI), 125 to 147 (YLFYSIAIASGAGPLIIFMGVGA), 162 to 184 (LLGAAAQFGIFTTVLGALALSSL), 189 to 211 (FSVAQAAAIGIIGGADGPTAIYV), 215 to 237 (LAPELLGAIAVAAYSYMALVPMI), 267 to 289 (IGFPLLLLILIALLLPSATPLLG), 309 to 328 (TAQNALINIVTIFLGLSVGS), 340 to 362 (TIGILVLGIVAFCVGTAAGVLMA), and 404 to 426 (FLLMHAMGPNVAGVIGSAVAAGV).

The protein belongs to the GcdB/MmdB/OadB family. In terms of assembly, heterotrimer of an alpha, a beta and a gamma subunit. Na(+) is required as a cofactor.

The protein localises to the cell membrane. It catalyses the reaction oxaloacetate + 2 Na(+)(in) + H(+) = pyruvate + 2 Na(+)(out) + CO2. Catalyzes the decarboxylation of oxaloacetate coupled to Na(+) translocation. In Vibrio cholerae serotype O1 (strain ATCC 39315 / El Tor Inaba N16961), this protein is Probable oxaloacetate decarboxylase beta chain (oadB).